The sequence spans 427 residues: Glutamate-1-semialdehyde 2,1-aminomutase (427 aa).

Lys267 is modified (N6-(pyridoxal phosphate)lysine).

It belongs to the class-III pyridoxal-phosphate-dependent aminotransferase family. HemL subfamily. In terms of assembly, homodimer. Requires pyridoxal 5'-phosphate as cofactor.

It is found in the cytoplasm. The enzyme catalyses (S)-4-amino-5-oxopentanoate = 5-aminolevulinate. The protein operates within porphyrin-containing compound metabolism; protoporphyrin-IX biosynthesis; 5-aminolevulinate from L-glutamyl-tRNA(Glu): step 2/2. This Geobacter sulfurreducens (strain ATCC 51573 / DSM 12127 / PCA) protein is Glutamate-1-semialdehyde 2,1-aminomutase.